A 1011-amino-acid chain; its full sequence is Protein translocase subunit SecA (1011 aa).

ATP contacts are provided by residues Gln87, 105–109, and Asp500; that span reads GEGKT. Residues 969-1011 form a disordered region; the sequence is SLPLGANPAPARPQPAVMQEQECPCGSGKPFNKCHGGEDEATA. Positions 991, 993, 1002, and 1003 each coordinate Zn(2+).

Belongs to the SecA family. Monomer and homodimer. Part of the essential Sec protein translocation apparatus which comprises SecA, SecYEG and auxiliary proteins SecDF-YajC and YidC. The cofactor is Zn(2+).

It localises to the cell inner membrane. The protein localises to the cytoplasm. The enzyme catalyses ATP + H2O + cellular proteinSide 1 = ADP + phosphate + cellular proteinSide 2.. Part of the Sec protein translocase complex. Interacts with the SecYEG preprotein conducting channel. Has a central role in coupling the hydrolysis of ATP to the transfer of proteins into and across the cell membrane, serving as an ATP-driven molecular motor driving the stepwise translocation of polypeptide chains across the membrane. The polypeptide is Protein translocase subunit SecA (Sorangium cellulosum (strain So ce56) (Polyangium cellulosum (strain So ce56))).